The sequence spans 162 residues: Nitric oxide synthase, inducible (162 aa).

The segment covering 24-37 (LQYHSLSKQQNESP) has biased composition (polar residues). A disordered region spans residues 24–65 (LQYHSLSKQQNESPQPLVGTGKKSPESLVKPDATPLSSPRHV). Zn(2+)-binding residues include Cys90 and Cys95. Residue Ser98 participates in (6R)-L-erythro-5,6,7,8-tetrahydrobiopterin binding. Glu132 is a binding site for L-arginine. His160 is an FAD binding site.

It belongs to the NOS family. As to quaternary structure, homodimer. Interacts with NHERF1. Interacts with GAPDH; induced by oxidatively-modified low-densitity lipoprotein (LDL(ox)). Interacts with S100A8 and S100A9 to form the iNOS-S100A8/9 transnitrosylase complex. Interacts with SPSB1, SPSB2 and SPSB4. Interacts with ELOC and CUL5 in the presence of SPSB1 or SPSB2 or SPSB4. Forms a complex with ASL, ASS1 and HSP90AA1; the complex regulates cell-autonomous L-arginine synthesis and citrulline recycling while channeling extracellular L-arginine to nitric oxide synthesis pathway. It depends on heme b as a cofactor. The cofactor is FAD. FMN is required as a cofactor. Requires (6R)-L-erythro-5,6,7,8-tetrahydrobiopterin as cofactor. Post-translationally, polyubiquitinated; mediated by SPSB1, SPSB2 and SPSB4, leading to proteasomal degradation.

Its subcellular location is the cytoplasm. The protein localises to the cytosol. The catalysed reaction is 2 L-arginine + 3 NADPH + 4 O2 + H(+) = 2 L-citrulline + 2 nitric oxide + 3 NADP(+) + 4 H2O. Its activity is regulated as follows. Regulated by calcium/calmodulin. In terms of biological role, produces nitric oxide (NO) which is a messenger molecule with diverse functions throughout the body. In macrophages, NO mediates tumoricidal and bactericidal actions. Also has nitrosylase activity and mediates cysteine S-nitrosylation of cytoplasmic target proteins such PTGS2/COX2. As component of the iNOS-S100A8/9 transnitrosylase complex involved in the selective inflammatory stimulus-dependent S-nitrosylation of GAPDH implicated in regulation of the GAIT complex activity and probably multiple targets including ANXA5, EZR, MSN and VIM. Involved in inflammation, enhances the synthesis of pro-inflammatory mediators such as IL6 and IL8. The polypeptide is Nitric oxide synthase, inducible (NOS2) (Macaca mulatta (Rhesus macaque)).